We begin with the raw amino-acid sequence, 417 residues long: Carbohydrate sulfotransferase 8 (417 aa).

Residues 1-10 (MTPRLGTMRL) are Cytoplasmic-facing. Residues 11 to 31 (ACMFSSILLFGAAGLLLFISL) traverse the membrane as a helical; Signal-anchor for type II membrane protein segment. Residues 32–417 (QDPIELSPQQ…NYSKPFSDLY (386 aa)) lie on the Lumenal side of the membrane. Positions 47 to 101 (FSIRPQQPQHDSHLRISTEKGTRDSPSGSPRGLQLQAPDQPRPHPKAAGSPLRLR) are disordered. Over residues 56 to 69 (HDSHLRISTEKGTR) the composition is skewed to basic and acidic residues. Residues Asn-121 and Asn-122 are each glycosylated (N-linked (GlcNAc...) asparagine). Residues 191–197 (PKAGCSN) and 251–259 (REPFERLVS) contribute to the 3'-phosphoadenylyl sulfate site. Residues Asn-287, Asn-360, and Asn-408 are each glycosylated (N-linked (GlcNAc...) asparagine).

This sequence belongs to the sulfotransferase 2 family. In terms of tissue distribution, strongly expressed in brain. Weakly expressed in lung and kidney. Weakly expressed in pituitary.

It is found in the golgi apparatus membrane. Its function is as follows. Catalyzes the transfer of sulfate to position 4 of non-reducing N-acetylgalactosamine (GalNAc) residues in both N-glycans and O-glycans. Required for biosynthesis of glycoprotein hormones lutropin and thyrotropin, by mediating sulfation of their carbohydrate structures. Only active against terminal GalNAcbeta1,GalNAcbeta. Not active toward chondroitin. The protein is Carbohydrate sulfotransferase 8 (Chst8) of Mus musculus (Mouse).